Reading from the N-terminus, the 418-residue chain is Tyrosine--tRNA ligase (418 aa).

Tyrosine 39 contacts L-tyrosine. The 'HIGH' region signature appears at 44–53; that stretch reads CTADSLHVGS. The L-tyrosine site is built by tyrosine 176 and glutamine 180. A 'KMSKS' region motif is present at residues 236–240; that stretch reads KMGKT. Lysine 239 is a binding site for ATP. The region spanning 350-416 is the S4 RNA-binding domain; sequence LPLAEMMRAT…KKRHALIRVL (67 aa).

This sequence belongs to the class-I aminoacyl-tRNA synthetase family. TyrS type 1 subfamily. In terms of assembly, homodimer.

Its subcellular location is the cytoplasm. It carries out the reaction tRNA(Tyr) + L-tyrosine + ATP = L-tyrosyl-tRNA(Tyr) + AMP + diphosphate + H(+). Catalyzes the attachment of tyrosine to tRNA(Tyr) in a two-step reaction: tyrosine is first activated by ATP to form Tyr-AMP and then transferred to the acceptor end of tRNA(Tyr). The chain is Tyrosine--tRNA ligase from Rhodospirillum rubrum (strain ATCC 11170 / ATH 1.1.1 / DSM 467 / LMG 4362 / NCIMB 8255 / S1).